Reading from the N-terminus, the 206-residue chain is Small ribosomal subunit protein uS4 (206 aa).

In terms of domain architecture, S4 RNA-binding spans 96 to 156; that stretch reads GRLDNVVYRM…EKSKKQARIK (61 aa).

Belongs to the universal ribosomal protein uS4 family. In terms of assembly, part of the 30S ribosomal subunit. Contacts protein S5. The interaction surface between S4 and S5 is involved in control of translational fidelity.

Its function is as follows. One of the primary rRNA binding proteins, it binds directly to 16S rRNA where it nucleates assembly of the body of the 30S subunit. With S5 and S12 plays an important role in translational accuracy. In Haemophilus influenzae (strain 86-028NP), this protein is Small ribosomal subunit protein uS4.